The chain runs to 247 residues: ATP synthase subunit a, chloroplastic (247 aa).

The next 5 helical transmembrane spans lie at Gln38–Val58, Val95–Leu115, Ile134–Ser154, Leu199–Leu219, and Gly220–Gly240.

The protein belongs to the ATPase A chain family. As to quaternary structure, F-type ATPases have 2 components, CF(1) - the catalytic core - and CF(0) - the membrane proton channel. CF(1) has five subunits: alpha(3), beta(3), gamma(1), delta(1), epsilon(1). CF(0) has four main subunits: a, b, b' and c.

It is found in the plastid. The protein localises to the chloroplast thylakoid membrane. In terms of biological role, key component of the proton channel; it plays a direct role in the translocation of protons across the membrane. The chain is ATP synthase subunit a, chloroplastic from Cucumis sativus (Cucumber).